A 106-amino-acid polypeptide reads, in one-letter code: UPF0145 protein Athe_0545 (106 aa).

Belongs to the UPF0145 family.

The sequence is that of UPF0145 protein Athe_0545 from Caldicellulosiruptor bescii (strain ATCC BAA-1888 / DSM 6725 / KCTC 15123 / Z-1320) (Anaerocellum thermophilum).